The primary structure comprises 468 residues: Methylenetetrahydrofolate--tRNA-(uracil-5-)-methyltransferase TrmFO (468 aa).

Residue 10-15 participates in FAD binding; that stretch reads GGGLAG.

Belongs to the MnmG family. TrmFO subfamily. Requires FAD as cofactor.

The protein resides in the cytoplasm. The enzyme catalyses uridine(54) in tRNA + (6R)-5,10-methylene-5,6,7,8-tetrahydrofolate + NADH + H(+) = 5-methyluridine(54) in tRNA + (6S)-5,6,7,8-tetrahydrofolate + NAD(+). The catalysed reaction is uridine(54) in tRNA + (6R)-5,10-methylene-5,6,7,8-tetrahydrofolate + NADPH + H(+) = 5-methyluridine(54) in tRNA + (6S)-5,6,7,8-tetrahydrofolate + NADP(+). Functionally, catalyzes the folate-dependent formation of 5-methyl-uridine at position 54 (M-5-U54) in all tRNAs. This chain is Methylenetetrahydrofolate--tRNA-(uracil-5-)-methyltransferase TrmFO, found in Chelativorans sp. (strain BNC1).